The following is a 540-amino-acid chain: Coatomer subunit delta (540 aa).

A disordered region spans residues 169-263; sequence RHEEMLRGKR…GMILGGKSGT (95 aa). Residues 179–197 are compositionally biased toward gly residues; sequence SGGYTGISGGGGMGSGGMG. A compositionally biased stretch (low complexity) spans 212–229; sequence NNNNNNNNNNNNNNNNNN. Over residues 238–250 the composition is skewed to polar residues; it reads SPNTSRPSAASSG. The segment covering 251 to 261 has biased composition (gly residues); sequence SQGGMILGGKS. Residues 304–540 enclose the MHD domain; the sequence is QEGVHITVEE…TLSVDTYEIK (237 aa).

The protein belongs to the adaptor complexes medium subunit family. Delta-COP subfamily. As to quaternary structure, oligomeric complex that consists of at least the alpha, beta, beta', gamma, delta, epsilon and zeta subunits.

It is found in the cytoplasm. The protein resides in the golgi apparatus membrane. The protein localises to the cytoplasmic vesicle. It localises to the COPI-coated vesicle membrane. The coatomer is a cytosolic protein complex that binds to dilysine motifs and reversibly associates with Golgi non-clathrin-coated vesicles, which further mediate biosynthetic protein transport from the ER, via the Golgi up to the trans Golgi network. Coatomer complex is required for budding from Golgi membranes, and is essential for the retrograde Golgi-to-ER transport of dilysine-tagged proteins. The protein is Coatomer subunit delta (copd) of Dictyostelium discoideum (Social amoeba).